Reading from the N-terminus, the 342-residue chain is Prostasin (342 aa).

The first 29 residues, Met-1–Arg-29, serve as a signal peptide directing secretion. Positions Ala-30–Gly-32 are cleaved as a propeptide — activation peptide. 2 disulfides stabilise this stretch: Cys-37/Cys-154 and Cys-70/Cys-86. One can recognise a Peptidase S1 domain in the interval Ile-45–Ala-286. The Charge relay system role is filled by His-85. Asn-110 is a glycosylation site (N-linked (GlcNAc...) asparagine). The active-site Charge relay system is Asp-134. Asn-159 carries N-linked (GlcNAc...) asparagine glycosylation. 3 cysteine pairs are disulfide-bonded: Cys-168–Cys-244, Cys-201–Cys-223, and Cys-234–Cys-262. Residue Ser-238 is the Charge relay system of the active site. A helical membrane pass occupies residues Leu-320 to Leu-340. A propeptide spanning residues Pro-323–His-342 is cleaved from the precursor.

Belongs to the peptidase S1 family. Heterodimer of two chains, light and heavy, held by a disulfide bond.

It is found in the cell membrane. Its subcellular location is the secreted. The protein resides in the extracellular space. Its function is as follows. Possesses a trypsin-like cleavage specificity with a preference for poly-basic substrates. Stimulates epithelial sodium channel (ENaC) activity through activating cleavage of the gamma subunits (SCNN1G). In Mus musculus (Mouse), this protein is Prostasin (Prss8).